A 464-amino-acid polypeptide reads, in one-letter code: NADH-quinone oxidoreductase subunit N (464 aa).

14 helical membrane passes run 6 to 26 (FLYI…LVLG), 36 to 56 (SMSL…LIYF), 75 to 95 (CLAR…FFFA), 101 to 121 (YEFA…VEAH), 123 to 143 (FLSF…LVCF), 157 to 177 (FFVL…LVYG), 197 to 217 (LGAT…LGAV), 231 to 253 (PTVA…FAGL), 257 to 279 (VVIP…MVVG), 293 to 313 (FAYA…TGVV), 317 to 337 (PVLF…TVLL), 360 to 380 (AFTF…SGFF), 395 to 415 (FGVP…IPCF), and 439 to 459 (NVGL…VVLL).

The protein belongs to the complex I subunit 2 family. In terms of assembly, NDH-1 is composed of 14 different subunits. Subunits NuoA, H, J, K, L, M, N constitute the membrane sector of the complex.

It is found in the cell inner membrane. The catalysed reaction is a quinone + NADH + 5 H(+)(in) = a quinol + NAD(+) + 4 H(+)(out). In terms of biological role, NDH-1 shuttles electrons from NADH, via FMN and iron-sulfur (Fe-S) centers, to quinones in the respiratory chain. The immediate electron acceptor for the enzyme in this species is believed to be ubiquinone. Couples the redox reaction to proton translocation (for every two electrons transferred, four hydrogen ions are translocated across the cytoplasmic membrane), and thus conserves the redox energy in a proton gradient. The chain is NADH-quinone oxidoreductase subunit N from Anaplasma phagocytophilum (strain HZ).